The following is a 31-amino-acid chain: Protein YmiC (31 aa).

The chain crosses the membrane as a helical span at residues 9–29 (WSWMGAFSLSMLFWAELLWII).

It is found in the cell inner membrane. The chain is Protein YmiC from Escherichia coli (strain K12).